Consider the following 258-residue polypeptide: Type III pantothenate kinase (258 aa).

ATP is bound at residue 9-16 (DIGNTSVN). 110 to 113 (GADR) is a binding site for substrate. Aspartate 112 (proton acceptor) is an active-site residue. Residue aspartate 132 coordinates K(+). Threonine 135 provides a ligand contact to ATP. A substrate-binding site is contributed by threonine 187.

The protein belongs to the type III pantothenate kinase family. Homodimer. NH4(+) is required as a cofactor. The cofactor is K(+).

It localises to the cytoplasm. The catalysed reaction is (R)-pantothenate + ATP = (R)-4'-phosphopantothenate + ADP + H(+). Its pathway is cofactor biosynthesis; coenzyme A biosynthesis; CoA from (R)-pantothenate: step 1/5. Functionally, catalyzes the phosphorylation of pantothenate (Pan), the first step in CoA biosynthesis. The protein is Type III pantothenate kinase of Dehalococcoides mccartyi (strain ATCC BAA-2266 / KCTC 15142 / 195) (Dehalococcoides ethenogenes (strain 195)).